The primary structure comprises 226 residues: Ribonuclease S-7 (226 aa).

Residues 1–27 form the signal peptide; it reads MGITGMIYIVTMVFSLIVLILSSSTVG. Residue glutamine 36 participates in RNA binding. The cysteines at positions 42 and 49 are disulfide-linked. Residue histidine 60 coordinates RNA. The Proton donor role is filled by histidine 60. N-linked (GlcNAc...) asparagine; alternate glycosylation is found at asparagine 74 and asparagine 77. The cysteines at positions 75 and 119 are disulfide-linked. RNA-binding positions include 98 to 99, phenylalanine 108, 111 to 112, and 115 to 116; these read NV, KQ, and KH. Glutamine 112 is a catalytic residue. The Proton acceptor role is filled by histidine 116. N-linked (GlcNAc...) asparagine glycans are attached at residues asparagine 126, asparagine 144, and asparagine 172. Intrachain disulfides connect cysteine 183–cysteine 220 and cysteine 198–cysteine 209.

This sequence belongs to the RNase T2 family. In terms of processing, the N-glycans attached at Asn-74 and Asn-77 consist of either monosaccharide (GlcNAc) or disaccharide (GlcNAc-GlcNAc) that could not be distinguished. The N-glycan at Asn-144 contains mannose and xylose, and at Asn-126 contains mannose, xylose and fucose. The N-glycan at Asn-172 consists of disaccharide (GlcNAc-GlcNAc).

It catalyses the reaction a ribonucleotidyl-ribonucleotide-RNA + H2O = a 3'-end 3'-phospho-ribonucleotide-RNA + a 5'-end dephospho-ribonucleoside-RNA + H(+). In terms of biological role, self-incompatibility (SI) is the inherited ability of a flowering plant to prevent self-fertilization by discriminating between self and non-self pollen during pollination. In many species, self-incompatibility is controlled by the single, multiallelic locus S. The sequence is that of Ribonuclease S-7 from Pyrus pyrifolia (Chinese pear).